The primary structure comprises 299 residues: CDP-abequose synthase (299 aa).

Thr117 is a substrate binding site. The active-site Proton acceptor is Tyr134.

This sequence belongs to the NAD(P)-dependent epimerase/dehydratase family.

It carries out the reaction CDP-alpha-D-abequose + NADP(+) = CDP-4-dehydro-3,6-dideoxy-alpha-D-glucose + NADPH + H(+). It participates in bacterial outer membrane biogenesis; LPS O-antigen biosynthesis. This Salmonella typhimurium (strain LT2 / SGSC1412 / ATCC 700720) protein is CDP-abequose synthase (rfbJ).